The sequence spans 212 residues: Riboflavin kinase (212 aa).

The tract at residues 1–83 (MTELYCERKT…NLLRYFDIAS (83 aa)) is unknown. A riboflavin kinase region spans residues 84 to 212 (IKLVGRVVTG…GDRVELEVYL (129 aa)). Residue 93 to 98 (GLGEGA) coordinates CDP. The Mg(2+) site is built by threonine 122 and asparagine 124. FMN is bound by residues threonine 179 and glutamate 187. 192-195 (VRVR) provides a ligand contact to CDP.

Belongs to the archaeal riboflavin kinase family. The cofactor is Mg(2+).

It catalyses the reaction riboflavin + CTP = CDP + FMN + H(+). Its pathway is cofactor biosynthesis; FMN biosynthesis; FMN from riboflavin (CTP route): step 1/1. Functionally, catalyzes the CTP-dependent phosphorylation of riboflavin (vitamin B2) to form flavin mononucleotide (FMN). The chain is Riboflavin kinase (ribK) from Pyrobaculum calidifontis (strain DSM 21063 / JCM 11548 / VA1).